A 472-amino-acid chain; its full sequence is Chromosomal replication initiator protein DnaA (472 aa).

The domain I, interacts with DnaA modulators stretch occupies residues 1-80 (MDTKQIWFTT…YQVNVRVIIS (80 aa)). Residues 80–130 (SSATPAPSEPVAVTPSEPSPTTEVAEPSFASFNQAAPMLNQLPLGDPNRSS) form a domain II region. Residues 131 to 347 (VLNPRYTFSS…GCLNRVIAYA (217 aa)) are domain III, AAA+ region. Residues glycine 175, glycine 177, lysine 178, and threonine 179 each contribute to the ATP site. The interval 348-472 (NLNRTPVTVE…RQRLYGENAR (125 aa)) is domain IV, binds dsDNA.

This sequence belongs to the DnaA family. In terms of assembly, oligomerizes as a right-handed, spiral filament on DNA at oriC.

The protein localises to the cytoplasm. Its function is as follows. Plays an essential role in the initiation and regulation of chromosomal replication. ATP-DnaA binds to the origin of replication (oriC) to initiate formation of the DNA replication initiation complex once per cell cycle. Binds the DnaA box (a 9 base pair repeat at the origin) and separates the double-stranded (ds)DNA. Forms a right-handed helical filament on oriC DNA; dsDNA binds to the exterior of the filament while single-stranded (ss)DNA is stabiized in the filament's interior. The ATP-DnaA-oriC complex binds and stabilizes one strand of the AT-rich DNA unwinding element (DUE), permitting loading of DNA polymerase. After initiation quickly degrades to an ADP-DnaA complex that is not apt for DNA replication. Binds acidic phospholipids. The polypeptide is Chromosomal replication initiator protein DnaA (Herpetosiphon aurantiacus (strain ATCC 23779 / DSM 785 / 114-95)).